We begin with the raw amino-acid sequence, 709 residues long: Polyribonucleotide nucleotidyltransferase (709 aa).

2 residues coordinate Mg(2+): Asp487 and Asp493. Residues 554–613 enclose the KH domain; sequence PRIHTMKISSDKIKDVIGKGGAVIRALCEETGTTIEIEDDGTIKIAATEGAAAKEAIRRI. The S1 motif domain maps to 623 to 691; it reads GKIYTGKVMR…RQGRIRLSIK (69 aa).

The protein belongs to the polyribonucleotide nucleotidyltransferase family. Component of the RNA degradosome, which is a multiprotein complex involved in RNA processing and mRNA degradation. Requires Mg(2+) as cofactor.

The protein localises to the cytoplasm. It catalyses the reaction RNA(n+1) + phosphate = RNA(n) + a ribonucleoside 5'-diphosphate. Its function is as follows. Involved in mRNA degradation. Catalyzes the phosphorolysis of single-stranded polyribonucleotides processively in the 3'- to 5'-direction. This chain is Polyribonucleotide nucleotidyltransferase, found in Aliivibrio fischeri (strain ATCC 700601 / ES114) (Vibrio fischeri).